A 1624-amino-acid chain; its full sequence is ATP-binding cassette sub-family A member 9 (1624 aa).

The helical transmembrane segment at 31–51 threads the bilayer; that stretch reads LLEWLFSFLLVLFLYLFFSNL. 2 N-linked (GlcNAc...) asparagine glycosylation sites follow: N120 and N195. 6 helical membrane passes run 221-243, 269-289, 300-320, 329-349, 354-374, and 398-418; these read VATD…YVSV, SWGL…ALIV, FVMV…LAFL, FLTG…GFPA, LPAF…TVGM, and LIIA…VLTL. The ABC transporter 1 domain maps to 481-716; the sequence is IRIKNLKKEY…WGIGYHLSLH (236 aa). An ATP-binding site is contributed by 517–524; it reads GHSGAGKT. Residues 864–884 traverse the membrane as a helical segment; the sequence is LWTILLLFGISFIPQLLEHLF. A glycan (N-linked (GlcNAc...) asparagine) is linked at N949. 6 consecutive transmembrane segments (helical) span residues 1026-1046, 1065-1085, 1108-1128, 1136-1156, 1163-1183, and 1200-1220; these read TFFW…SSIG, AYWF…LLLM, ILCS…ISFI, SGIW…ATDL, GLFF…LFIF, and EIVY…LFIL. In terms of domain architecture, ABC transporter 2 spans 1288-1521; sequence LRKEYAGKKK…FGKDYLLEMK (234 aa). 1326–1333 provides a ligand contact to ATP; the sequence is GHNGAGKS.

It belongs to the ABC transporter superfamily. ABCA family. As to expression, widely expressed with higher expression in heart.

Its subcellular location is the membrane. Transporter that may play a role in monocyte differentiation and lipid transport and homeostasis. This chain is ATP-binding cassette sub-family A member 9 (ABCA9), found in Homo sapiens (Human).